The chain runs to 405 residues: Growth/differentiation factor 11 (405 aa).

The first 24 residues, 1-24 (MVLAAPLLLGFLLLALELRPRGEA), serve as a signal peptide directing secretion. Positions 25–296 (AEGPAAAAAA…VLENTKRSRR (272 aa)) are excised as a propeptide. N-linked (GlcNAc...) asparagine glycosylation is present at Asn-92. 4 disulfide bridges follow: Cys-302–Cys-312, Cys-311–Cys-370, Cys-339–Cys-402, and Cys-343–Cys-404.

The protein belongs to the TGF-beta family. Homodimer; disulfide-linked. Interacts directly with ACVR2B. Interacts directly with ACVR2A. Interacts with ACVR1B, TGFBR1 and ACVR1C in an ACVR2B-dependent manner. Interacts with FST isoform 2/FS288. In terms of processing, synthesized as large precursor molecule that undergoes proteolytic cleavage by furin-like proteases. This produces an inactive form consisting of the mature C-terminal portion non-covalently bound to its cleaved N-terminal propeptide. Activation of the mature form requires additional cleavage of the propeptide by a tolloid-like metalloproteinase.

The protein resides in the secreted. Secreted signal that acts globally to regulate anterior/posterior axial patterning during development. May play critical roles in patterning both mesodermal and neural tissues. It is required for proper vertebral patterning and orofacial development. Signals through activin receptors type-2, ACVR2A and ACVR2B, and activin receptors type-1, ACVR1B, ACVR1C and TGFBR1 leading to the phosphorylation of SMAD2 and SMAD3. This Rattus norvegicus (Rat) protein is Growth/differentiation factor 11 (Gdf11).